We begin with the raw amino-acid sequence, 248 residues long: Protein PARTING DANCERS homolog (248 aa).

The segment covering 1-10 (MERSTHSTGW) has biased composition (polar residues). The tract at residues 1-25 (MERSTHSTGWTCLPPPPPEPAAPGR) is disordered.

This sequence belongs to the ERCC1/RAD10/SWI10 family. Interacts with SHOC1 (via C-terminus). Interacts with HEI10. In terms of tissue distribution, highly expressed in anthers and pistil during meiosis. Expressed in pollen mother cells (PMCs) during meiosis. Expressed at low levels in roots, shoots, leaves, flowers, and glumes.

It is found in the chromosome. The protein resides in the nucleus. The protein localises to the cytoplasm. It localises to the cell membrane. In terms of biological role, essential for normal crossover (CO) formation during meiosis. Essential component for the formation of class I meiotic COs. Interacts with SHOC1, another meiotic component, to regulate CO formation, possibly by stabilizing the recombination intermediates during meiosis. PTD and SHOC1 may form transient heterotrimeric or heterotetrameric complexes with HEI10 and/or ZIP4 to promote class I COs formation. Does not seem to be involved in early meiotic recombination steps involving double-strand break (DSB) formation, processing, and single-strand invasion. Does not seem to be involved in homologous pairing or synaptonemal complex (SC) assembly. The polypeptide is Protein PARTING DANCERS homolog (Oryza sativa subsp. japonica (Rice)).